Consider the following 232-residue polypeptide: Ribose-5-phosphate isomerase A (232 aa).

Substrate-binding positions include 28–31 (TGST), 83–86 (DGAD), and 96–99 (KGGG). Glu105 (proton acceptor) is an active-site residue. A substrate-binding site is contributed by Lys123.

It belongs to the ribose 5-phosphate isomerase family. As to quaternary structure, homodimer.

It catalyses the reaction aldehydo-D-ribose 5-phosphate = D-ribulose 5-phosphate. It participates in carbohydrate degradation; pentose phosphate pathway; D-ribose 5-phosphate from D-ribulose 5-phosphate (non-oxidative stage): step 1/1. Catalyzes the reversible conversion of ribose-5-phosphate to ribulose 5-phosphate. In Rhodopseudomonas palustris (strain BisB5), this protein is Ribose-5-phosphate isomerase A.